The chain runs to 122 residues: Large ribosomal subunit protein uL14 (122 aa).

The protein belongs to the universal ribosomal protein uL14 family. In terms of assembly, part of the 50S ribosomal subunit. Forms a cluster with proteins L3 and L19. In the 70S ribosome, L14 and L19 interact and together make contacts with the 16S rRNA in bridges B5 and B8.

In terms of biological role, binds to 23S rRNA. Forms part of two intersubunit bridges in the 70S ribosome. This chain is Large ribosomal subunit protein uL14, found in Mycobacteroides abscessus (strain ATCC 19977 / DSM 44196 / CCUG 20993 / CIP 104536 / JCM 13569 / NCTC 13031 / TMC 1543 / L948) (Mycobacterium abscessus).